Consider the following 302-residue polypeptide: N-acetyl-D-glucosamine kinase (302 aa).

Residues 4–11 (GFDIGGTK) and 133–139 (GGGGLVL) each bind ATP. His156, Cys176, Cys178, and Cys183 together coordinate Zn(2+).

Belongs to the ROK (NagC/XylR) family. NagK subfamily.

It catalyses the reaction N-acetyl-D-glucosamine + ATP = N-acetyl-D-glucosamine 6-phosphate + ADP + H(+). It participates in cell wall biogenesis; peptidoglycan recycling. Catalyzes the phosphorylation of N-acetyl-D-glucosamine (GlcNAc) derived from cell-wall degradation, yielding GlcNAc-6-P. The sequence is that of N-acetyl-D-glucosamine kinase from Salmonella typhi.